The primary structure comprises 370 residues: Asporin (370 aa).

The N-terminal stretch at 1–15 (MKVYVLLVFLTLCSA) is a signal peptide. Ser45 carries an O-linked (GalNAc...) serine glycan. Positions 56-92 (FFPFDLFSTCPFGCQCYSRVVHCSDLGLSSVPSNIPF) constitute an LRRNT domain. Disulfide bonds link Cys65–Cys71 and Cys69–Cys78. LRR repeat units lie at residues 93 to 114 (DTRM…DFKG), 117 to 138 (SLYA…AFLT), 141 to 163 (KLRR…PKSL), 164 to 183 (AELR…TFKG), 186 to 209 (ALHV…AFEG), 232 to 253 (TLLE…DFKR), 256 to 277 (DLQR…SLAN), 280 to 302 (RVRE…QELK), 303 to 324 (YLQI…DFCP), 332 to 354 (SLYS…PATF), and 355 to 370 (RCVL…NFRK). Asn272 carries an N-linked (GlcNAc...) asparagine glycan. A disulfide bridge links Cys323 with Cys356.

This sequence belongs to the small leucine-rich proteoglycan (SLRP) family. SLRP class I subfamily.

It is found in the secreted. Its subcellular location is the extracellular space. The protein localises to the extracellular matrix. This chain is Asporin (ASPN), found in Bos taurus (Bovine).